The sequence spans 98 residues: Large ribosomal subunit protein uL23 (98 aa).

The protein belongs to the universal ribosomal protein uL23 family. In terms of assembly, part of the 50S ribosomal subunit. Contacts protein L29, and trigger factor when it is bound to the ribosome.

In terms of biological role, one of the early assembly proteins it binds 23S rRNA. One of the proteins that surrounds the polypeptide exit tunnel on the outside of the ribosome. Forms the main docking site for trigger factor binding to the ribosome. This chain is Large ribosomal subunit protein uL23, found in Marinomonas sp. (strain MWYL1).